The sequence spans 156 residues: Methylated-DNA--protein-cysteine methyltransferase (156 aa).

The active-site Nucleophile; methyl group acceptor is cysteine 120.

It belongs to the MGMT family.

The protein resides in the cytoplasm. It carries out the reaction a 6-O-methyl-2'-deoxyguanosine in DNA + L-cysteinyl-[protein] = S-methyl-L-cysteinyl-[protein] + a 2'-deoxyguanosine in DNA. The catalysed reaction is a 4-O-methyl-thymidine in DNA + L-cysteinyl-[protein] = a thymidine in DNA + S-methyl-L-cysteinyl-[protein]. In terms of biological role, involved in the cellular defense against the biological effects of O6-methylguanine (O6-MeG) and O4-methylthymine (O4-MeT) in DNA. Repairs the methylated nucleobase in DNA by stoichiometrically transferring the methyl group to a cysteine residue in the enzyme. This is a suicide reaction: the enzyme is irreversibly inactivated. This chain is Methylated-DNA--protein-cysteine methyltransferase, found in Metallosphaera sedula (strain ATCC 51363 / DSM 5348 / JCM 9185 / NBRC 15509 / TH2).